The chain runs to 184 residues: NADH-quinone oxidoreductase subunit B (184 aa).

Residues Cys63, Cys64, Cys128, and Cys158 each contribute to the [4Fe-4S] cluster site.

Belongs to the complex I 20 kDa subunit family. In terms of assembly, NDH-1 is composed of 14 different subunits. Subunits NuoB, C, D, E, F, and G constitute the peripheral sector of the complex. The cofactor is [4Fe-4S] cluster.

Its subcellular location is the cell inner membrane. The catalysed reaction is a quinone + NADH + 5 H(+)(in) = a quinol + NAD(+) + 4 H(+)(out). Functionally, NDH-1 shuttles electrons from NADH, via FMN and iron-sulfur (Fe-S) centers, to quinones in the respiratory chain. The immediate electron acceptor for the enzyme in this species is believed to be ubiquinone. Couples the redox reaction to proton translocation (for every two electrons transferred, four hydrogen ions are translocated across the cytoplasmic membrane), and thus conserves the redox energy in a proton gradient. This chain is NADH-quinone oxidoreductase subunit B, found in Xylella fastidiosa (strain M12).